A 365-amino-acid chain; its full sequence is F-box protein At1g48060 (365 aa).

Positions 1–20 (MKPQEEEEKNENMARKRSKS) are disordered. In terms of domain architecture, F-box spans 20-69 (SSSSLSIPLDIATDIFLRLPAKSVVRFSCVAKHWSSITTAPYFTNSFETR).

This Arabidopsis thaliana (Mouse-ear cress) protein is F-box protein At1g48060.